A 467-amino-acid polypeptide reads, in one-letter code: UDP-N-acetylmuramoylalanine--D-glutamate ligase (467 aa).

118–124 is a binding site for ATP; that stretch reads GTNGKTT.

The protein belongs to the MurCDEF family.

It is found in the cytoplasm. The enzyme catalyses UDP-N-acetyl-alpha-D-muramoyl-L-alanine + D-glutamate + ATP = UDP-N-acetyl-alpha-D-muramoyl-L-alanyl-D-glutamate + ADP + phosphate + H(+). It functions in the pathway cell wall biogenesis; peptidoglycan biosynthesis. Its function is as follows. Cell wall formation. Catalyzes the addition of glutamate to the nucleotide precursor UDP-N-acetylmuramoyl-L-alanine (UMA). The sequence is that of UDP-N-acetylmuramoylalanine--D-glutamate ligase from Streptomyces avermitilis (strain ATCC 31267 / DSM 46492 / JCM 5070 / NBRC 14893 / NCIMB 12804 / NRRL 8165 / MA-4680).